A 97-amino-acid chain; its full sequence is Histone H1.C2 (97 aa).

A disordered region spans residues 24–97; that stretch reads AAVPPKKAAP…KKAVKKAPKK (74 aa). Positions 31-97 are enriched in basic residues; that stretch reads AAPKKAVAKK…KKAVKKAPKK (67 aa).

It localises to the nucleus. Its subcellular location is the chromosome. In Trypanosoma cruzi, this protein is Histone H1.C2.